The chain runs to 96 residues: Co-chaperonin GroES (96 aa).

This sequence belongs to the GroES chaperonin family. Heptamer of 7 subunits arranged in a ring. Interacts with the chaperonin GroEL.

The protein localises to the cytoplasm. Its function is as follows. Together with the chaperonin GroEL, plays an essential role in assisting protein folding. The GroEL-GroES system forms a nano-cage that allows encapsulation of the non-native substrate proteins and provides a physical environment optimized to promote and accelerate protein folding. GroES binds to the apical surface of the GroEL ring, thereby capping the opening of the GroEL channel. This Methylibium petroleiphilum (strain ATCC BAA-1232 / LMG 22953 / PM1) protein is Co-chaperonin GroES.